The sequence spans 380 residues: Chorismate synthase (380 aa).

NADP(+) contacts are provided by Arg-40 and Arg-46. FMN is bound by residues 128 to 130 (RSS), 247 to 248 (QA), Gly-292, 307 to 311 (KPIPT), and Arg-333.

It belongs to the chorismate synthase family. Homotetramer. It depends on FMNH2 as a cofactor.

It catalyses the reaction 5-O-(1-carboxyvinyl)-3-phosphoshikimate = chorismate + phosphate. The protein operates within metabolic intermediate biosynthesis; chorismate biosynthesis; chorismate from D-erythrose 4-phosphate and phosphoenolpyruvate: step 7/7. Functionally, catalyzes the anti-1,4-elimination of the C-3 phosphate and the C-6 proR hydrogen from 5-enolpyruvylshikimate-3-phosphate (EPSP) to yield chorismate, which is the branch point compound that serves as the starting substrate for the three terminal pathways of aromatic amino acid biosynthesis. This reaction introduces a second double bond into the aromatic ring system. The protein is Chorismate synthase of Alkaliphilus metalliredigens (strain QYMF).